The following is a 306-amino-acid chain: Ubiquitin-conjugating enzyme E2Q-like protein CG4502 (306 aa).

A disordered region spans residues 18 to 77; it reads HKSSNNNNNNNNNHNNNINNNNNNDKVDGATGSSPNINNNNNNNNNNNNHDGAAAPSSAG. Composition is skewed to low complexity over residues 22-41 and 53-77; these read NNNN…NNNN and NINN…SSAG. One can recognise a UBC core domain in the interval 138 to 299; sequence IRTRRLMKEY…VKTHEKYGWV (162 aa). The active-site Glycyl thioester intermediate is the C234.

The protein belongs to the ubiquitin-conjugating enzyme family.

It catalyses the reaction S-ubiquitinyl-[E1 ubiquitin-activating enzyme]-L-cysteine + [E2 ubiquitin-conjugating enzyme]-L-cysteine = [E1 ubiquitin-activating enzyme]-L-cysteine + S-ubiquitinyl-[E2 ubiquitin-conjugating enzyme]-L-cysteine.. It participates in protein modification; protein ubiquitination. Catalyzes the covalent attachment of ubiquitin to other proteins. This is Ubiquitin-conjugating enzyme E2Q-like protein CG4502 from Drosophila melanogaster (Fruit fly).